We begin with the raw amino-acid sequence, 147 residues long: Hemoglobin subunit beta-H1 (147 aa).

The region spanning 3–147 (HFTAEEKAAI…VANALSHKYH (145 aa)) is the Globin domain. Heme b contacts are provided by His-64 and His-93.

It belongs to the globin family. In terms of assembly, heterotetramer of two alpha chains and two beta chains. Red blood cells.

Its function is as follows. This is an embryonic beta-type chain. The chain is Hemoglobin subunit beta-H1 (Hbb-bh1) from Mus musculus (Mouse).